The sequence spans 397 residues: Cysteine desulfurase IscS (397 aa).

Residues 72–73 (GS), asparagine 152, glutamine 180, and 200–202 (SAH) each bind pyridoxal 5'-phosphate. Residue lysine 203 is modified to N6-(pyridoxal phosphate)lysine. Threonine 238 serves as a coordination point for pyridoxal 5'-phosphate. Cysteine 328 (cysteine persulfide intermediate) is an active-site residue. Cysteine 328 serves as a coordination point for [2Fe-2S] cluster.

Belongs to the class-V pyridoxal-phosphate-dependent aminotransferase family. NifS/IscS subfamily. Homodimer. Forms a heterotetramer with IscU, interacts with other sulfur acceptors. Requires pyridoxal 5'-phosphate as cofactor.

Its subcellular location is the cytoplasm. The catalysed reaction is (sulfur carrier)-H + L-cysteine = (sulfur carrier)-SH + L-alanine. The protein operates within cofactor biosynthesis; iron-sulfur cluster biosynthesis. Master enzyme that delivers sulfur to a number of partners involved in Fe-S cluster assembly, tRNA modification or cofactor biosynthesis. Catalyzes the removal of elemental sulfur atoms from cysteine to produce alanine. Functions as a sulfur delivery protein for Fe-S cluster synthesis onto IscU, an Fe-S scaffold assembly protein, as well as other S acceptor proteins. The protein is Cysteine desulfurase IscS of Clostridium botulinum (strain ATCC 19397 / Type A).